Here is a 353-residue protein sequence, read N- to C-terminus: Glutamine synthetase cytosolic isozyme 1-5 (353 aa).

Position 2 is an N-acetylthreonine (T2). A Phosphoserine modification is found at S3. One can recognise a GS beta-grasp domain in the interval 19–99 (IIAEYIWIGG…VMCDAYRPAG (81 aa)). Residues 106–353 (NRHKAVKIFD…TSMIAETTIL (248 aa)) enclose the GS catalytic domain.

It belongs to the glutamine synthetase family. In terms of assembly, homooctamer. In terms of tissue distribution, not expressed in roots.

It localises to the cytoplasm. It catalyses the reaction L-glutamate + NH4(+) + ATP = L-glutamine + ADP + phosphate + H(+). The protein is Glutamine synthetase cytosolic isozyme 1-5 (GLN1-5) of Arabidopsis thaliana (Mouse-ear cress).